A 206-amino-acid polypeptide reads, in one-letter code: Small ribosomal subunit protein uS5 (206 aa).

The disordered stretch occupies residues 1 to 42; the sequence is MENKTEVVVAENANNQTQPERKKFDRKPNRRPQGPKQFQKDD. In terms of domain architecture, S5 DRBM spans 43 to 106; it reads FEEKVVTIRR…KEAKKNLIRV (64 aa).

Belongs to the universal ribosomal protein uS5 family. As to quaternary structure, part of the 30S ribosomal subunit. Contacts proteins S4 and S8.

Its function is as follows. With S4 and S12 plays an important role in translational accuracy. Located at the back of the 30S subunit body where it stabilizes the conformation of the head with respect to the body. The polypeptide is Small ribosomal subunit protein uS5 (Mesoplasma florum (strain ATCC 33453 / NBRC 100688 / NCTC 11704 / L1) (Acholeplasma florum)).